A 583-amino-acid polypeptide reads, in one-letter code: ATP-dependent lipid A-core flippase (583 aa).

Helical transmembrane passes span 27–47, 69–89, 142–162, 165–185, and 249–269; these read LAVAVVALIINAVSDTYMVSL, LLVFGLMFIRGISSFVSTYCL, ALVSIVREGTSIIGLLVLMFY, WQLSLVLILVAPVVAWAIGFV, and AAANPIIQMIASIAIVVVLYL. The ABC transmembrane type-1 domain maps to 28-310; the sequence is AVAVVALIIN…LTNVTSQFQR (283 aa). Residues 342–578 enclose the ABC transporter domain; sequence VNVKDISFTY…DGAYAQLHRI (237 aa). 376–383 contributes to the ATP binding site; it reads GRSGSGKS.

This sequence belongs to the ABC transporter superfamily. Lipid exporter (TC 3.A.1.106) family. In terms of assembly, homodimer.

The protein resides in the cell inner membrane. It catalyses the reaction ATP + H2O + lipid A-core oligosaccharideSide 1 = ADP + phosphate + lipid A-core oligosaccharideSide 2.. Its function is as follows. Involved in lipopolysaccharide (LPS) biosynthesis. Translocates lipid A-core from the inner to the outer leaflet of the inner membrane. Transmembrane domains (TMD) form a pore in the inner membrane and the ATP-binding domain (NBD) is responsible for energy generation. The protein is ATP-dependent lipid A-core flippase of Vibrio vulnificus (strain CMCP6).